Here is a 395-residue protein sequence, read N- to C-terminus: Renin (395 aa).

A signal peptide spans 1-21; sequence MLQSWEFVLLISCFLCFSSDA. Residues 22–43 constitute a propeptide, activation peptide; that stretch reads LQRISLKKMPSIRETLQEMGMK. N-linked (GlcNAc...) asparagine glycosylation occurs at N64. Residues 79-392 enclose the Peptidase A1 domain; it reads YYGEISIGTP…DRQNNRIGFA (314 aa). Residue D97 is part of the active site. 2 cysteine pairs are disulfide-bonded: C110–C117 and C274–C278. The active site involves D283. An intrachain disulfide couples C316 to C351.

This sequence belongs to the peptidase A1 family. Post-translationally, N-glycosylated. In terms of tissue distribution, expressed by the venom gland (at protein level).

It is found in the secreted. The enzyme catalyses Cleavage of Leu-|-Xaa bond in angiotensinogen to generate angiotensin I.. Its activity is regulated as follows. Inhibited completely by aspartyl protease inhibitor pepstatin A, but not by the serine- or metalloproteinase inhibitors PMSF or EDTA. Functionally, renin is a highly specific endopeptidase, whose only known function is to generate angiotensin I from angiotensinogen in the plasma, initiating a cascade of reactions that produce an elevation of blood pressure and increased sodium retention by the kidney. This protein is also found in snake venom and shown to specifically cleave human and porcine angiotensinogen into angiotensin I. It does not have general protease activity, no cleavage of alpha or beta casein. May be directly responsible for elevation of blood pressure in the victims of envenomation. This Echis ocellatus (Ocellated saw-scaled viper) protein is Renin.